Here is a 155-residue protein sequence, read N- to C-terminus: Deoxyuridine 5'-triphosphate nucleotidohydrolase (155 aa).

Substrate-binding positions include arginine 74–glycine 76, asparagine 87, and threonine 91–aspartate 93.

It belongs to the dUTPase family. Requires Mg(2+) as cofactor.

The catalysed reaction is dUTP + H2O = dUMP + diphosphate + H(+). It functions in the pathway pyrimidine metabolism; dUMP biosynthesis; dUMP from dCTP (dUTP route): step 2/2. In terms of biological role, this enzyme is involved in nucleotide metabolism: it produces dUMP, the immediate precursor of thymidine nucleotides and it decreases the intracellular concentration of dUTP so that uracil cannot be incorporated into DNA. The protein is Deoxyuridine 5'-triphosphate nucleotidohydrolase of Cereibacter sphaeroides (strain ATCC 17023 / DSM 158 / JCM 6121 / CCUG 31486 / LMG 2827 / NBRC 12203 / NCIMB 8253 / ATH 2.4.1.) (Rhodobacter sphaeroides).